The chain runs to 393 residues: Phosphoglycerate kinase (393 aa).

Residues 21 to 23 (DFN), arginine 37, 60 to 63 (HLGR), arginine 119, and arginine 152 each bind substrate. Residues lysine 202, glutamate 323, and 349-352 (GGDT) contribute to the ATP site.

This sequence belongs to the phosphoglycerate kinase family. Monomer.

The protein localises to the cytoplasm. It carries out the reaction (2R)-3-phosphoglycerate + ATP = (2R)-3-phospho-glyceroyl phosphate + ADP. The protein operates within carbohydrate degradation; glycolysis; pyruvate from D-glyceraldehyde 3-phosphate: step 2/5. The chain is Phosphoglycerate kinase from Desulforudis audaxviator (strain MP104C).